Consider the following 407-residue polypeptide: V-set and immunoglobulin domain-containing protein 1 (407 aa).

The signal sequence occupies residues Met-1 to Met-22. The Ig-like V-type domain occupies Val-23–Leu-134. Over Val-23 to Glu-234 the chain is Extracellular. N-linked (GlcNAc...) asparagine glycosylation occurs at Asn-39. 2 cysteine pairs are disulfide-bonded: Cys-44–Cys-118 and Cys-163–Cys-213. The Ig-like C2-type domain maps to Pro-145–Thr-229. Residues Asn-202 and Asn-221 are each glycosylated (N-linked (GlcNAc...) asparagine). The chain crosses the membrane as a helical span at residues Val-235–Val-255. The Cytoplasmic portion of the chain corresponds to Val-256–Ala-407. 2 disordered regions span residues Gln-268–Ser-289 and Thr-318–Ala-407. Phosphoserine is present on residues Ser-273 and Ser-274. Residues Asp-361–Glu-371 show a composition bias toward acidic residues.

The protein resides in the membrane. The sequence is that of V-set and immunoglobulin domain-containing protein 1 (Vsig1) from Mus musculus (Mouse).